The sequence spans 122 residues: Large ribosomal subunit protein uL14 (122 aa).

This sequence belongs to the universal ribosomal protein uL14 family. In terms of assembly, part of the 50S ribosomal subunit. Forms a cluster with proteins L3 and L19. In the 70S ribosome, L14 and L19 interact and together make contacts with the 16S rRNA in bridges B5 and B8.

In terms of biological role, binds to 23S rRNA. Forms part of two intersubunit bridges in the 70S ribosome. The protein is Large ribosomal subunit protein uL14 of Xylella fastidiosa (strain 9a5c).